The chain runs to 819 residues: Leucine--tRNA ligase (819 aa).

Positions 41–51 match the 'HIGH' region motif; the sequence is PYPSGTLHVGH. The 'KMSKS' region motif lies at 578-582; it reads KMSKS. Residue Lys581 coordinates ATP.

It belongs to the class-I aminoacyl-tRNA synthetase family.

It is found in the cytoplasm. The catalysed reaction is tRNA(Leu) + L-leucine + ATP = L-leucyl-tRNA(Leu) + AMP + diphosphate. The polypeptide is Leucine--tRNA ligase (Fervidobacterium nodosum (strain ATCC 35602 / DSM 5306 / Rt17-B1)).